A 360-amino-acid polypeptide reads, in one-letter code: Histidinol-phosphate aminotransferase (360 aa).

Lys-222 carries the N6-(pyridoxal phosphate)lysine modification.

This sequence belongs to the class-II pyridoxal-phosphate-dependent aminotransferase family. Histidinol-phosphate aminotransferase subfamily. Homodimer. Requires pyridoxal 5'-phosphate as cofactor.

The catalysed reaction is L-histidinol phosphate + 2-oxoglutarate = 3-(imidazol-4-yl)-2-oxopropyl phosphate + L-glutamate. It participates in amino-acid biosynthesis; L-histidine biosynthesis; L-histidine from 5-phospho-alpha-D-ribose 1-diphosphate: step 7/9. The sequence is that of Histidinol-phosphate aminotransferase from Listeria monocytogenes serotype 4b (strain CLIP80459).